The following is a 661-amino-acid chain: Pentatricopeptide repeat-containing protein At5g66631 (661 aa).

PPR repeat units follow at residues 139–173 (VHFS…GEEK), 176–210 (CTES…GGIP), 211–245 (NSRT…RITR), 246–280 (TLKH…GKFP), 410–444 (DAYT…GIKL), 445–475 (PFST…DRTL), 484–518 (LMLL…GVSP), 519–553 (DIQT…GLEP), and 554–588 (DPYM…NLMP).

Belongs to the PPR family. P subfamily.

In Arabidopsis thaliana (Mouse-ear cress), this protein is Pentatricopeptide repeat-containing protein At5g66631.